The sequence spans 901 residues: Valine--tRNA ligase (901 aa).

Residues K536 to S540 carry the 'KMSKS' region motif. K539 serves as a coordination point for ATP. A coiled-coil region spans residues L831 to S901.

The protein belongs to the class-I aminoacyl-tRNA synthetase family. ValS type 1 subfamily. Monomer.

It localises to the cytoplasm. The catalysed reaction is tRNA(Val) + L-valine + ATP = L-valyl-tRNA(Val) + AMP + diphosphate. Functionally, catalyzes the attachment of valine to tRNA(Val). As ValRS can inadvertently accommodate and process structurally similar amino acids such as threonine, to avoid such errors, it has a 'posttransfer' editing activity that hydrolyzes mischarged Thr-tRNA(Val) in a tRNA-dependent manner. This is Valine--tRNA ligase from Chlorobaculum tepidum (strain ATCC 49652 / DSM 12025 / NBRC 103806 / TLS) (Chlorobium tepidum).